We begin with the raw amino-acid sequence, 327 residues long: Tetraacyldisaccharide 4'-kinase (327 aa).

An ATP-binding site is contributed by 54 to 61 (TTGGTGKT). Residues 78 to 106 (PHILSRGHGGRERGPIGVNPNRSTPRDVG) are disordered.

This sequence belongs to the LpxK family.

The catalysed reaction is a lipid A disaccharide + ATP = a lipid IVA + ADP + H(+). Its pathway is glycolipid biosynthesis; lipid IV(A) biosynthesis; lipid IV(A) from (3R)-3-hydroxytetradecanoyl-[acyl-carrier-protein] and UDP-N-acetyl-alpha-D-glucosamine: step 6/6. Transfers the gamma-phosphate of ATP to the 4'-position of a tetraacyldisaccharide 1-phosphate intermediate (termed DS-1-P) to form tetraacyldisaccharide 1,4'-bis-phosphate (lipid IVA). The sequence is that of Tetraacyldisaccharide 4'-kinase from Gluconobacter oxydans (strain 621H) (Gluconobacter suboxydans).